The chain runs to 351 residues: Ion-translocating oxidoreductase complex subunit D (351 aa).

A run of 4 helical transmembrane segments spans residues 20–40 (IMLW…YFFG), 44–64 (LIQV…TLSL), 89–109 (LPPL…IIIA), and 123–143 (PAMI…TSWL). Thr187 carries the FMN phosphoryl threonine modification. 5 consecutive transmembrane segments (helical) span residues 215-235 (LSGI…LFLL), 244-264 (IPVS…IIAP), 267-287 (FAQP…FFIA), 301-321 (LIFG…GGYP), and 322-342 (DGVA…DYYT).

The protein belongs to the NqrB/RnfD family. In terms of assembly, the complex is composed of six subunits: RnfA, RnfB, RnfC, RnfD, RnfE and RnfG. It depends on FMN as a cofactor.

Its subcellular location is the cell inner membrane. Its function is as follows. Part of a membrane-bound complex that couples electron transfer with translocation of ions across the membrane. The sequence is that of Ion-translocating oxidoreductase complex subunit D from Pectobacterium atrosepticum (strain SCRI 1043 / ATCC BAA-672) (Erwinia carotovora subsp. atroseptica).